The primary structure comprises 648 residues: MAKRLVLFAAVVIALVALTTAEGEASRQLQCERELQESSLEACRQVVDQQLAGRLPWSTGLQMRCCQQLRDVSAKCRSVAVSQVARQYEQTVVPPKGGSFYPGETTPLQQLQQGIFWGTSSQTVQGYYPGVTSPRQGSYYPGQASPQQPGQGQQPGKWQEPGQGQQWYYPTSLQQPGQGQQIGKGQQGYYPTSLQQPGQGQQGYYPTSLQHTGQRQQPVQGQQPEQGQQPGQWQQGYYPTSPQQLGQGQQPRQWQQSGQGQQGHYPTSLQQPGQGQQGHYLASQQQPGQGQQGHYPASQQQPGQGQQGHYPASQQQPGQGQQGHYPASQQEPGQGQQGQIPASQQQPGQGQQGHYPASLQQPGQGQQGHYPTSLQQLGQGQQTGQPGQKQQPGQGQQTGQGQQPEQEQQPGQGQQGYYPTSLQQPGQGQQQGQGQQGYYPTSLQQPGQGQQGHYPASLQQPGQGQPGQRQQPGQGQHPEQGKQPGQGQQGYYPTSPQQPGQGQQLGQGQQGYYPTSPQQPGQGQQPGQGQQGHCPTSPQQSGQAQQPGQGQQIGQVQQPGQGQQGYYPTSVQQPGQGQQSGQGQQSGQGHQPGQGQQSGQEQQGYDSPYHVSAEQQAASPMVAKAQQPATQLPTVCRMEGGDALSASQ.

Residues 1 to 21 (MAKRLVLFAAVVIALVALTTA) form the signal peptide. Positions 127 to 648 (YYPGVTSPRQ…EGGDALSASQ (522 aa)) are disordered. Composition is skewed to low complexity over residues 141-166 (PGQASPQQPGQGQQPGKWQEPGQGQQ), 195-236 (QQPG…WQQG), and 243-263 (QQLGQGQQPRQWQQSGQGQQG). The span at 264-274 (HYPTSLQQPGQ) shows a compositional bias: polar residues. 5 stretches are compositionally biased toward low complexity: residues 284–353 (QQQP…GQQG), 360–416 (QQPG…GQQG), 459–502 (QQPG…PGQG), 510–523 (QGYYPTSPQQPGQG), and 531–565 (QGHCPTSPQQSGQAQQPGQGQQIGQVQQPGQGQQG). Residues 578 to 592 (QQSGQGQQSGQGHQP) show a composition bias toward gly residues. Low complexity predominate over residues 593–604 (GQGQQSGQEQQG).

It belongs to the gliadin/glutenin family. Disulfide-bridge linked aggregates.

Functionally, glutenins are high-molecular weight seed storage proteins of wheat endosperm. Thought to be responsible for the visco-elastic property of wheat dough. This chain is Glutenin, high molecular weight subunit DY10 (GLU-D1-2B), found in Triticum aestivum (Wheat).